The chain runs to 1401 residues: Alpha-latrotoxin-Lt1a (1401 aa).

The first 20 residues, 1–20, serve as a signal peptide directing secretion; sequence MISVGEIMERANHSLVRMRR. A furin-like endopeptidase recognition region region spans residues 17 to 20; it reads RMRR. Residues 238–257 are helix H8 is the probable transmembrane region of the tetrameric pore inserted in the target cell membrane; sequence VLYALLYGTQTYVSVMFFLL. C413 and C1066 are disulfide-bonded. ANK repeat units follow at residues 458–489, 490–521, 525–554, 559–589, 593–622, 626–656, 660–690, 695–723, 729–758, 762–791, 795–824, 828–857, 862–891, 895–924, 928–957, 971–1003, 1004–1033, 1035–1064, 1068–1097, 1101–1131, 1137–1166, and 1170–1199; these read LYNA…ATFD, HGRT…ELNQ, KGYT…SINS, FLQT…NINE, DGFT…DVNA, TGLT…DINA, NNIT…NANV, GLLS…NVNV, GGIT…NIEQ, EKYT…NFEA, SGAT…NWRD, NGQM…TVVD, NSDT…DINT, KGLA…NVYI, DGMN…KFEW, EECA…GNFA, ICGP…SVDG, KTDT…KVNH, NGMT…DFRR, RGTT…DINI, DKDT…DVTI, and YDKT…KFRR. The tract at residues 1026–1032 is 4C4.1 epitope; sequence EEFLSVD. A furin-like endopeptidase recognition region region spans residues 1196–1199; that stretch reads KFRR. Positions 1200–1401 are excised as a propeptide; sequence EYKSSYGERS…SDGILTKKLM (202 aa).

This sequence belongs to the cationic peptide 01 (latrotoxin) family. 03 (alpha-latrotoxin) subfamily. As to quaternary structure, homotetramer in membranes. Post-translationally, processed by furin-like proteases at both the N- and C-termini. In terms of tissue distribution, expressed in venom gland, cephalothorax, and abdomen tissues from both males and females.

Its subcellular location is the secreted. The protein localises to the target cell membrane. Functionally, presynaptic neurotoxin that causes massive release of neurotransmitters from vertebrate (but not invertebrate) nerve terminals and endocrine cells via a complex mechanism involving activation of receptor(s) and toxin insertion into the plasma membrane with subsequent pore formation. Binds to neurexin-1-alpha (NRXN1) in a calcium dependent manner, adhesion G protein-coupled receptor L1 (ADGRL1, also termed latrophilin-1 and calcium-independent receptor of latrotoxin (CIRL)), and receptor-type tyrosine-protein phosphatase S (PTPRS), also termed PTP sigma. NRXN1 and PTPRS are suggested to provide a platform for binding and subsequent pore formation events. In contrast, binding to ADGRL1 does not involve oligomerization and channel formation, but direct downstream stimulation of the synaptic fusion machinery. This Latrodectus tredecimguttatus (Mediterranean black widow spider) protein is Alpha-latrotoxin-Lt1a.